Here is a 312-residue protein sequence, read N- to C-terminus: MKHLLSISDLSKDEIVGLLDEADRFKEVLEGREVKKLPTLRGRTIFTLFYENSTRTRSSFETAGKWMSADVINISASSSSVKKGESLKDTGLTLSAIGADAIIMRHPASGAAQQLAQFVAPGGNGPSVINAGDGSHQHPTQALLDALTIRQRTGRIEGLKVVIVGDCLHSRVVRSNVDLLSTLGAEVVLVAPPTLLPIGVENWPVRFSYDMDAEIADADVVMMLRVQQERMQGGFFPSHREYATLYGMSKEREARLKDSAIIMHPGPMLRGMEINFQVADAPRTAVLQQVSNGVHMRMAILFALVAGSDATI.

The carbamoyl phosphate site is built by R55 and T56. Residue K83 participates in L-aspartate binding. R105, H138, and Q141 together coordinate carbamoyl phosphate. R171 and R225 together coordinate L-aspartate. Carbamoyl phosphate-binding residues include G266 and P267.

This sequence belongs to the aspartate/ornithine carbamoyltransferase superfamily. ATCase family. As to quaternary structure, heterododecamer (2C3:3R2) of six catalytic PyrB chains organized as two trimers (C3), and six regulatory PyrI chains organized as three dimers (R2).

The enzyme catalyses carbamoyl phosphate + L-aspartate = N-carbamoyl-L-aspartate + phosphate + H(+). It functions in the pathway pyrimidine metabolism; UMP biosynthesis via de novo pathway; (S)-dihydroorotate from bicarbonate: step 2/3. In terms of biological role, catalyzes the condensation of carbamoyl phosphate and aspartate to form carbamoyl aspartate and inorganic phosphate, the committed step in the de novo pyrimidine nucleotide biosynthesis pathway. The protein is Aspartate carbamoyltransferase catalytic subunit of Corynebacterium glutamicum (strain ATCC 13032 / DSM 20300 / JCM 1318 / BCRC 11384 / CCUG 27702 / LMG 3730 / NBRC 12168 / NCIMB 10025 / NRRL B-2784 / 534).